A 185-amino-acid chain; its full sequence is Ribosome-recycling factor (185 aa).

This sequence belongs to the RRF family.

Its subcellular location is the cytoplasm. Its function is as follows. Responsible for the release of ribosomes from messenger RNA at the termination of protein biosynthesis. May increase the efficiency of translation by recycling ribosomes from one round of translation to another. The polypeptide is Ribosome-recycling factor (Aeromonas salmonicida (strain A449)).